We begin with the raw amino-acid sequence, 409 residues long: MSSHPIQVFSEIGKLKKVMLHRPGKELENLLPDYLERLLFDDIPFLEDAQKEHDAFAQALRDEGIEVLYLEQLAAESLTSPEIRDQFIEEYLDEANIRDRQTKVAIRELLHGIKDNQELVEKTMAGIQKVELPEIPDEAKDLTDLVESDYPFAIDPMPNLYFTRDPFATIGNAVSLNHMFADTRNRETLYGKYIFKYHPIYGGKVDLVYNREEDTRIEGGDELVLSKDVLAVGISQRTDAASIEKLLVNIFKKNVGFKKVLAFEFANNRKFMHLDTVFTMVDYDKFTIHPEIEGDLHVYSVTYENEKLKIVEEKGDLAELLAQNLGVEKVHLIRCGGGNIVAAAREQWNDGSNTLTIAPGVVVVYDRNTVTNKILEEYGLRLIKIRGSELVRGRGGPRCMSMPFEREEV.

The active-site Amidino-cysteine intermediate is the Cys399.

This sequence belongs to the arginine deiminase family.

The protein localises to the cytoplasm. The catalysed reaction is L-arginine + H2O = L-citrulline + NH4(+). It participates in amino-acid degradation; L-arginine degradation via ADI pathway; carbamoyl phosphate from L-arginine: step 1/2. This chain is Arginine deiminase, found in Streptococcus pneumoniae (strain JJA).